The primary structure comprises 153 residues: Small ribosomal subunit protein bS16 (153 aa).

The interval 114–153 (ENEPVGEAITPKKKKAKAEDAEAAADAPAEAAAESEAADK) is disordered. Residues 137-153 (AADAPAEAAAESEAADK) are compositionally biased toward low complexity.

The protein belongs to the bacterial ribosomal protein bS16 family.

In Rhodococcus jostii (strain RHA1), this protein is Small ribosomal subunit protein bS16.